The sequence spans 782 residues: Potassium transporter 6 (782 aa).

Topologically, residues 1-18 are cytoplasmic; the sequence is MEIESGSYQNAKKESWRT. Residues 19–39 traverse the membrane as a helical segment; it reads VLTLAYQSLGVVYGDLSISPL. Residues 40 to 61 lie on the Extracellular side of the membrane; the sequence is YVYKSTFAEDIHHSESNEEIFG. A helical transmembrane segment spans residues 62 to 82; that stretch reads VLSFIFWTITLVPLLKYVFIV. Residues 83–153 lie on the Cytoplasmic side of the membrane; that stretch reads LRADDNGEGG…TLEKHGVLQK (71 aa). The helical transmembrane segment at 154–174 threads the bilayer; sequence ILLVLALIGTCMVIGDGVLTP. Over 175 to 195 the chain is Extracellular; sequence AISVFSAVSGVELSMSKEHHK. Residues 196-216 traverse the membrane as a helical segment; that stretch reads YIELPAACVILIGLFALQHYG. Residues 217-219 lie on the Cytoplasmic side of the membrane; sequence THR. Residues 220-240 form a helical membrane-spanning segment; sequence VGFLFAPVILLWLMCISAIGV. Topologically, residues 241 to 270 are extracellular; that stretch reads YNIFHWNPHVYQALSPYYMYKFLKKTQSRG. A helical membrane pass occupies residues 271–291; the sequence is WMSLGGILLCITGSEAMFADL. The Cytoplasmic portion of the chain corresponds to 292–296; sequence GHFSQ. Residues 297 to 317 form a helical membrane-spanning segment; that stretch reads LSIKIAFTSLVYPSLILAYMG. The Extracellular segment spans residues 318 to 347; the sequence is QAAYLSQHHIIESEYNIGFYVSVPERLRWP. Residues 348-368 form a helical membrane-spanning segment; the sequence is VLVIAILAAVVGSQAIITGTF. Topologically, residues 369 to 395 are cytoplasmic; sequence SIIKQCSALGCFPKVKIVHTSSKIHGQ. A helical membrane pass occupies residues 396 to 416; that stretch reads IYIPEINWILMVLCLAVTIGF. Over 417 to 421 the chain is Extracellular; the sequence is RDTKR. The next 2 helical transmembrane spans lie at 422 to 442 and 443 to 463; these read LGNASGLAVITVMLVTTCLMS and LVIVLCWHKSVIFAIVFVVFF. Topologically, residues 464 to 474 are extracellular; that stretch reads GTIESLYFSAS. Residues 475–495 traverse the membrane as a helical segment; sequence LIKFLEGAWVPIALAFCFLLA. Topologically, residues 496–782 are cytoplasmic; it reads MCTWHYGTLK…TLEVGMIYNV (287 aa). Positions 664–675 are enriched in basic and acidic residues; that stretch reads YESDIDDPDKPG. Positions 664–693 are disordered; sequence YESDIDDPDKPGTSEIRSPKPKKKSKSKVK. Positions 682–693 are enriched in basic residues; the sequence is PKPKKKSKSKVK.

This sequence belongs to the HAK/KUP transporter (TC 2.A.72.3) family.

The protein resides in the cell membrane. Probable potassium transporter. This is Potassium transporter 6 (POT6) from Arabidopsis thaliana (Mouse-ear cress).